The primary structure comprises 115 residues: Nucleoid-associated protein Ccel_0243 (115 aa).

Belongs to the YbaB/EbfC family. Homodimer.

Its subcellular location is the cytoplasm. The protein localises to the nucleoid. Functionally, binds to DNA and alters its conformation. May be involved in regulation of gene expression, nucleoid organization and DNA protection. The protein is Nucleoid-associated protein Ccel_0243 of Ruminiclostridium cellulolyticum (strain ATCC 35319 / DSM 5812 / JCM 6584 / H10) (Clostridium cellulolyticum).